We begin with the raw amino-acid sequence, 219 residues long: Orotate phosphoribosyltransferase (219 aa).

K26 is a 5-phospho-alpha-D-ribose 1-diphosphate binding site. Position 34 to 35 (34 to 35) interacts with orotate; it reads FF. 5-phospho-alpha-D-ribose 1-diphosphate is bound by residues 72 to 73, R98, K99, K102, H104, and 124 to 132; these read YK and DDVITAGTA. Orotate-binding residues include T128 and R156.

It belongs to the purine/pyrimidine phosphoribosyltransferase family. PyrE subfamily. As to quaternary structure, homodimer. The cofactor is Mg(2+).

It carries out the reaction orotidine 5'-phosphate + diphosphate = orotate + 5-phospho-alpha-D-ribose 1-diphosphate. It participates in pyrimidine metabolism; UMP biosynthesis via de novo pathway; UMP from orotate: step 1/2. Functionally, catalyzes the transfer of a ribosyl phosphate group from 5-phosphoribose 1-diphosphate to orotate, leading to the formation of orotidine monophosphate (OMP). This is Orotate phosphoribosyltransferase from Xylella fastidiosa (strain M23).